Consider the following 505-residue polypeptide: Maturase K (505 aa).

This sequence belongs to the intron maturase 2 family. MatK subfamily.

It localises to the plastid. The protein resides in the chloroplast. In terms of biological role, usually encoded in the trnK tRNA gene intron. Probably assists in splicing its own and other chloroplast group II introns. The protein is Maturase K of Dioon edule (Virgin's palm).